We begin with the raw amino-acid sequence, 136 residues long: MQSDIYHPGHSFPSWVLCWVHSCGHEGHLRETAEIRKTHQNGDLQIRGGRGRRESTEIFQVASVTEGEESPPAICMEVFLFLWFIAPIYACVCRIFKIQVRNTVKNSSTASLAPSISTSEERQIRIERHHYHLYGQ.

A helical transmembrane segment spans residues 73–93; it reads AICMEVFLFLWFIAPIYACVC.

Its subcellular location is the membrane. The polypeptide is Gilles de la Tourette syndrome chromosomal region candidate gene 1 protein (GTSCR1) (Homo sapiens (Human)).